Reading from the N-terminus, the 218-residue chain is Pyridoxal 5'-phosphate synthase subunit PdxT (218 aa).

Residue 54–56 (GES) participates in L-glutamine binding. The Nucleophile role is filled by cysteine 86. L-glutamine contacts are provided by residues arginine 120 and 149–150 (IR). Active-site charge relay system residues include histidine 197 and glutamate 199.

The protein belongs to the glutaminase PdxT/SNO family. As to quaternary structure, in the presence of PdxS, forms a dodecamer of heterodimers. Only shows activity in the heterodimer.

It carries out the reaction aldehydo-D-ribose 5-phosphate + D-glyceraldehyde 3-phosphate + L-glutamine = pyridoxal 5'-phosphate + L-glutamate + phosphate + 3 H2O + H(+). It catalyses the reaction L-glutamine + H2O = L-glutamate + NH4(+). Its pathway is cofactor biosynthesis; pyridoxal 5'-phosphate biosynthesis. Its function is as follows. Catalyzes the hydrolysis of glutamine to glutamate and ammonia as part of the biosynthesis of pyridoxal 5'-phosphate. The resulting ammonia molecule is channeled to the active site of PdxS. This Saccharopolyspora erythraea (strain ATCC 11635 / DSM 40517 / JCM 4748 / NBRC 13426 / NCIMB 8594 / NRRL 2338) protein is Pyridoxal 5'-phosphate synthase subunit PdxT.